Here is a 146-residue protein sequence, read N- to C-terminus: Kappa-casein (146 aa).

4 O-linked (GalNAc...) threonine glycosylation sites follow: Thr-97, Thr-107, Thr-112, and Thr-118. Residue Thr-121 is modified to Phosphothreonine. Position 125 is a phosphoserine; alternate (Ser-125). A glycan (O-linked (GalNAc...) serine; alternate) is linked at Ser-125. Thr-142 is a glycosylation site (O-linked (GalNAc...) threonine). Ser-143 is subject to Phosphoserine.

It belongs to the kappa-casein family. In terms of tissue distribution, mammary gland specific. Secreted in milk.

It localises to the secreted. Its function is as follows. Kappa-casein stabilizes micelle formation, preventing casein precipitation in milk. This is Kappa-casein (CSN3) from Panthera uncia (Snow leopard).